Consider the following 286-residue polypeptide: 4-diphosphocytidyl-2-C-methyl-D-erythritol kinase (286 aa).

Residue K13 is part of the active site. Position 96–106 (96–106 (PMGGGIGGGSS)) interacts with ATP. D138 is a catalytic residue.

The protein belongs to the GHMP kinase family. IspE subfamily.

The enzyme catalyses 4-CDP-2-C-methyl-D-erythritol + ATP = 4-CDP-2-C-methyl-D-erythritol 2-phosphate + ADP + H(+). It participates in isoprenoid biosynthesis; isopentenyl diphosphate biosynthesis via DXP pathway; isopentenyl diphosphate from 1-deoxy-D-xylulose 5-phosphate: step 3/6. Functionally, catalyzes the phosphorylation of the position 2 hydroxy group of 4-diphosphocytidyl-2C-methyl-D-erythritol. This Pseudoalteromonas atlantica (strain T6c / ATCC BAA-1087) protein is 4-diphosphocytidyl-2-C-methyl-D-erythritol kinase.